Consider the following 92-residue polypeptide: Small ribosomal subunit protein uS19 (92 aa).

It belongs to the universal ribosomal protein uS19 family.

Its function is as follows. Protein S19 forms a complex with S13 that binds strongly to the 16S ribosomal RNA. The sequence is that of Small ribosomal subunit protein uS19 from Methylocella silvestris (strain DSM 15510 / CIP 108128 / LMG 27833 / NCIMB 13906 / BL2).